Reading from the N-terminus, the 699-residue chain is Elongation factor G (699 aa).

The region spanning 8-288 (EDYRNFGIMA…AVCEYLPSPL (281 aa)) is the tr-type G domain. Residues 17 to 24 (AHIDAGKT), 86 to 90 (DTPGH), and 140 to 143 (NKMD) contribute to the GTP site.

This sequence belongs to the TRAFAC class translation factor GTPase superfamily. Classic translation factor GTPase family. EF-G/EF-2 subfamily.

The protein resides in the cytoplasm. Its function is as follows. Catalyzes the GTP-dependent ribosomal translocation step during translation elongation. During this step, the ribosome changes from the pre-translocational (PRE) to the post-translocational (POST) state as the newly formed A-site-bound peptidyl-tRNA and P-site-bound deacylated tRNA move to the P and E sites, respectively. Catalyzes the coordinated movement of the two tRNA molecules, the mRNA and conformational changes in the ribosome. The chain is Elongation factor G from Allorhizobium ampelinum (strain ATCC BAA-846 / DSM 112012 / S4) (Agrobacterium vitis (strain S4)).